Reading from the N-terminus, the 63-residue chain is Toxin Cn11 (63 aa).

Residues 2-63 (RDGYPVDEKG…KVWTYETNTC (62 aa)) enclose the LCN-type CS-alpha/beta domain. Disulfide bonds link cysteine 12–cysteine 63, cysteine 16–cysteine 37, cysteine 23–cysteine 44, and cysteine 27–cysteine 46.

The protein belongs to the long (4 C-C) scorpion toxin superfamily. Sodium channel inhibitor family. As to expression, expressed by the venom gland.

The protein localises to the secreted. Functionally, first blocker of sodium channels (Nav) found in scorpions. Is lethal to crustaceans (Cambarellus montezumae), less toxic to insects (crickets) and non-toxic to mammals (mice) at the doses assayed. The chain is Toxin Cn11 from Centruroides noxius (Mexican scorpion).